We begin with the raw amino-acid sequence, 130 residues long: Small ribosomal subunit protein uS8 (130 aa).

It belongs to the universal ribosomal protein uS8 family. In terms of assembly, part of the 30S ribosomal subunit. Contacts proteins S5 and S12.

Its function is as follows. One of the primary rRNA binding proteins, it binds directly to 16S rRNA central domain where it helps coordinate assembly of the platform of the 30S subunit. In Yersinia enterocolitica serotype O:8 / biotype 1B (strain NCTC 13174 / 8081), this protein is Small ribosomal subunit protein uS8.